The following is a 123-amino-acid chain: Chondroitin proteoglycan 8 (123 aa).

The N-terminal stretch at 1–16 (MRPFILLALLFSVAIA) is a signal peptide. The disordered stretch occupies residues 32–123 (SVRRSTRGAD…SGSGDEAPAE (92 aa)). The span at 38-60 (RGADKKADSSDSSDSNEKDDKVT) shows a compositional bias: basic and acidic residues. O-linked (Xyl...) (chondroitin sulfate) serine glycosylation is found at Ser63 and Ser65. The span at 74–84 (EQLRRVARDVE) shows a compositional bias: basic and acidic residues. Ser87, Ser93, and Ser114 each carry an O-linked (Xyl...) (chondroitin sulfate) serine glycan.

The chain is Chondroitin proteoglycan 8 (cpg-8) from Caenorhabditis briggsae.